The sequence spans 283 residues: Acetylglutamate kinase (283 aa).

Substrate is bound by residues 63-64 (GG), Arg85, and Asn178.

It belongs to the acetylglutamate kinase family. ArgB subfamily.

The protein resides in the cytoplasm. The enzyme catalyses N-acetyl-L-glutamate + ATP = N-acetyl-L-glutamyl 5-phosphate + ADP. The protein operates within amino-acid biosynthesis; L-arginine biosynthesis; N(2)-acetyl-L-ornithine from L-glutamate: step 2/4. Its function is as follows. Catalyzes the ATP-dependent phosphorylation of N-acetyl-L-glutamate. This Prochlorococcus marinus (strain MIT 9312) protein is Acetylglutamate kinase.